The chain runs to 668 residues: DNA ligase (668 aa).

Residues 32 to 36, 81 to 82, and glutamate 111 contribute to the NAD(+) site; these read DVEYD and SL. The active-site N6-AMP-lysine intermediate is lysine 113. NAD(+)-binding residues include arginine 134, glutamate 171, lysine 290, and lysine 314. 4 residues coordinate Zn(2+): cysteine 408, cysteine 411, cysteine 426, and cysteine 432. A BRCT domain is found at 591 to 668; the sequence is EEDLSLKGQT…DEEALIAILS (78 aa).

It belongs to the NAD-dependent DNA ligase family. LigA subfamily. The cofactor is Mg(2+). It depends on Mn(2+) as a cofactor.

The catalysed reaction is NAD(+) + (deoxyribonucleotide)n-3'-hydroxyl + 5'-phospho-(deoxyribonucleotide)m = (deoxyribonucleotide)n+m + AMP + beta-nicotinamide D-nucleotide.. Functionally, DNA ligase that catalyzes the formation of phosphodiester linkages between 5'-phosphoryl and 3'-hydroxyl groups in double-stranded DNA using NAD as a coenzyme and as the energy source for the reaction. It is essential for DNA replication and repair of damaged DNA. This Shewanella piezotolerans (strain WP3 / JCM 13877) protein is DNA ligase.